Here is a 544-residue protein sequence, read N- to C-terminus: Esterase P (544 aa).

Residues 1 to 19 (MSIFKRLLCLTLLWIAALE) form the signal peptide. Asn75 carries an N-linked (GlcNAc...) asparagine glycan. A disulfide bridge links Cys83 with Cys102. Asn114 is a glycosylation site (N-linked (GlcNAc...) asparagine). Ser206 functions as the Acyl-ester intermediate in the catalytic mechanism. Cys258 and Cys270 are oxidised to a cystine. N-linked (GlcNAc...) asparagine glycans are attached at residues Asn262 and Asn456. His466 (charge relay system) is an active-site residue. Cys514 and Cys535 form a disulfide bridge.

It belongs to the type-B carboxylesterase/lipase family. As to quaternary structure, monomer.

It is found in the secreted. It carries out the reaction a carboxylic ester + H2O = an alcohol + a carboxylate + H(+). The sequence is that of Esterase P (Est-P) from Drosophila melanogaster (Fruit fly).